Consider the following 360-residue polypeptide: DNA replication and repair protein RecF (360 aa).

30-37 serves as a coordination point for ATP; the sequence is GQNGSGKT.

It belongs to the RecF family.

The protein resides in the cytoplasm. Its function is as follows. The RecF protein is involved in DNA metabolism; it is required for DNA replication and normal SOS inducibility. RecF binds preferentially to single-stranded, linear DNA. It also seems to bind ATP. This Shewanella oneidensis (strain ATCC 700550 / JCM 31522 / CIP 106686 / LMG 19005 / NCIMB 14063 / MR-1) protein is DNA replication and repair protein RecF.